Consider the following 158-residue polypeptide: Superoxide dismutase [Cu-Zn] (158 aa).

3 residues coordinate Cu cation: H46, H48, and H63. C57 and C149 form a disulfide bridge. 4 residues coordinate Zn(2+): H63, H71, H80, and D83. H120 contacts Cu cation.

The protein belongs to the Cu-Zn superoxide dismutase family. In terms of assembly, homodimer. Requires Cu cation as cofactor. Zn(2+) is required as a cofactor.

It localises to the cytoplasm. The enzyme catalyses 2 superoxide + 2 H(+) = H2O2 + O2. Destroys radicals which are normally produced within the cells and which are toxic to biological systems. In Onchocerca volvulus, this protein is Superoxide dismutase [Cu-Zn] (sod-1).